The sequence spans 473 residues: Protein translocase subunit SecD (473 aa).

A run of 6 helical transmembrane segments spans residues valine 5–proline 25, alanine 316–glycine 336, isoleucine 337–phenylalanine 357, proline 364–leucine 384, tryptophan 409–phenylalanine 429, and glycine 436–threonine 456.

This sequence belongs to the SecD/SecF family. SecD subfamily. Forms a complex with SecF. Part of the essential Sec protein translocation apparatus which comprises SecA, SecYEG and auxiliary proteins SecDF. Other proteins may also be involved.

The protein resides in the cell inner membrane. Its function is as follows. Part of the Sec protein translocase complex. Interacts with the SecYEG preprotein conducting channel. SecDF uses the proton motive force (PMF) to complete protein translocation after the ATP-dependent function of SecA. This is Protein translocase subunit SecD from Elusimicrobium minutum (strain Pei191).